We begin with the raw amino-acid sequence, 821 residues long: Xylosyltransferase 1 (821 aa).

The disordered stretch occupies residues 1-121 (YFSHRPKEKV…PETKSDQVPK (121 aa)). Topologically, residues 1–821 (YFSHRPKEKV…GAVKPDGRLR (821 aa)) are lumenal. The span at 9–25 (KVRTDSNNENSVPKDFE) shows a compositional bias: basic and acidic residues. A compositionally biased stretch (polar residues) spans 27–36 (VDNSNFAPRT). Basic and acidic residues-rich tracts occupy residues 41-58 (HQPE…ERLQ) and 76-87 (GPKEVLPPREKA). A glycan (N-linked (GlcNAc...) asparagine) is linked at asparagine 90. Cystine bridges form between cysteine 122/cysteine 150, cysteine 166/cysteine 407, cysteine 426/cysteine 439, and cysteine 428/cysteine 437. UDP-alpha-D-xylose contacts are provided by residues valine 198, aspartate 226, and 255–257 (TIW). N-linked (GlcNAc...) asparagine glycosylation is present at asparagine 286. 359–360 (DW) serves as a coordination point for UDP-alpha-D-xylose. UDP-alpha-D-xylose-binding positions include serine 440 and 463 to 464 (RK). Intrachain disulfides connect cysteine 540/cysteine 789 and cysteine 782/cysteine 795. Asparagine 642 carries N-linked (GlcNAc...) asparagine glycosylation. A disordered region spans residues 801-821 (SSFSPDPKSELGAVKPDGRLR).

This sequence belongs to the glycosyltransferase 14 family. XylT subfamily. Monomer. The cofactor is a divalent metal cation. In terms of processing, contains 7 disulfide bonds. Post-translationally, N-glycosylated.

The protein localises to the golgi apparatus membrane. The catalysed reaction is UDP-alpha-D-xylose + L-seryl-[protein] = 3-O-(beta-D-xylosyl)-L-seryl-[protein] + UDP + H(+). The protein operates within glycan metabolism; chondroitin sulfate biosynthesis. Its pathway is glycan metabolism; heparan sulfate biosynthesis. Functionally, catalyzes the first step in the biosynthesis of chondroitin sulfate and dermatan sulfate proteoglycans, such as DCN. Transfers D-xylose from UDP-D-xylose to specific serine residues of the core protein. Required for normal maturation of chondrocytes during bone development, normal onset of ossification and normal embryonic and postnatal skeleton development, especially of the long bones. In Rattus norvegicus (Rat), this protein is Xylosyltransferase 1 (Xylt1).